The following is a 236-amino-acid chain: UPF0257 lipoprotein YnfC (236 aa).

The N-terminal stretch at 1–16 is a signal peptide; it reads MKKPLLLTLLCMILAG. C17 carries the N-palmitoyl cysteine lipid modification. The S-diacylglycerol cysteine moiety is linked to residue C17.

The protein belongs to the UPF0257 family.

It is found in the cell membrane. In Salmonella heidelberg (strain SL476), this protein is UPF0257 lipoprotein YnfC.